Reading from the N-terminus, the 541-residue chain is Solute carrier family 2, facilitated glucose transporter member 10 (541 aa).

Residues 1-15 are Cytoplasmic-facing; it reads MGHSPPVLPLCASVS. A helical membrane pass occupies residues 16–36; it reads LLGGLTFGYELAVISGALLPL. Topologically, residues 37 to 48 are extracellular; sequence QLDFGLSCLEQE. Residues 49 to 69 traverse the membrane as a helical segment; the sequence is FLVGSLLLGALLASLVGGFLI. Residues 70-77 lie on the Cytoplasmic side of the membrane; sequence DCYGRKQA. Residues 78 to 98 form a helical membrane-spanning segment; sequence ILGSNLVLLAGSLTLGLAGSL. Topologically, residues 99-106 are extracellular; it reads AWLVLGRA. A helical transmembrane segment spans residues 107 to 127; the sequence is VVGFAISLSSMACCIYVSELV. At 128–134 the chain is on the cytoplasmic side; that stretch reads GPRQRGV. Residues 135–155 form a helical membrane-spanning segment; sequence LVSLYEAGITVGILLSYALNY. Residues 156-166 are Extracellular-facing; the sequence is ALAGTPWGWRH. The chain crosses the membrane as a helical span at residues 167 to 187; it reads MFGWATAPAVLQSLSLLFLPA. At 188–233 the chain is on the cytoplasmic side; sequence GTDETATHKDLIPLQGGEAPKLGPGRPRYSFLDLFRARDNMRGRTT. A helical transmembrane segment spans residues 234–254; that stretch reads VGLGLVLFQQLTGQPNVLCYA. 242–243 lines the D-glucose pocket; that stretch reads QQ. The Extracellular segment spans residues 255–269; that stretch reads STIFSSVGFHGGSSA. Residues 270 to 290 traverse the membrane as a helical segment; that stretch reads VLASVGLGAVKVAATLTAMGL. The Cytoplasmic portion of the chain corresponds to 291–298; sequence VDRAGRRA. A helical transmembrane segment spans residues 299 to 319; the sequence is LLLAGCALMALSVSGIGLVSF. The Extracellular segment spans residues 320–414; the sequence is AVPMDSGPSC…HALLRWTALL (95 aa). The N-linked (GlcNAc...) asparagine glycan is linked to N334. The interval 340–388 is disordered; that stretch reads GLPGDSGLLQDSSLPPIPRTNEDQREPILSTAKKTKPHPRSGDPSAPPR. A helical transmembrane segment spans residues 415–435; that stretch reads CLMVFVSAFSFGFGPVTWLVL. A D-glucose-binding site is contributed by W432. Residues 436 to 445 are Cytoplasmic-facing; sequence SEIYPVEIRG. Residues 446 to 466 traverse the membrane as a helical segment; it reads RAFAFCNSFNWAANLFISLSF. The Extracellular segment spans residues 467–476; it reads LDLIGTIGLS. The chain crosses the membrane as a helical span at residues 477-497; that stretch reads WTFLLYGLTAVLGLGFIYLFV. Residues 498–541 lie on the Cytoplasmic side of the membrane; that stretch reads PETKGQSLAEIDQQFQKRRFTLSFGHRQNSTGIPYSRIEISAAS.

It belongs to the major facilitator superfamily. Sugar transporter (TC 2.A.1.1) family. Glucose transporter subfamily. In terms of tissue distribution, widely expressed; highest levels in liver and pancreas.

Its subcellular location is the endomembrane system. It localises to the cytoplasm. The protein localises to the perinuclear region. The enzyme catalyses D-glucose(out) = D-glucose(in). In terms of biological role, facilitative glucose transporter required for the development of the cardiovascular system. This chain is Solute carrier family 2, facilitated glucose transporter member 10, found in Homo sapiens (Human).